A 263-amino-acid polypeptide reads, in one-letter code: MLRKAISTARNFKYPLFNCERRFSYFDMFRSKRKFTSGILTEQLALKLDSELGYVKQVLDETLPKKGYEKALHSFIIHEDPSLNYISALKETAKERIRVTVPVYSSRKSYVQTKPITHSAENENGNETSDELVFFQHSIPAYVQLTNNHGTILCALILCKGMLHFDSISFQSPQNSQAFSSDLRLILQKSQKYTGRKTKHVPASIKSSLLEFLDEQGITVKFMKALISRSWRKENVSYKHWIHNIIGFILPSESSTTKKSDSQ.

It localises to the mitochondrion. This is an uncharacterized protein from Schizosaccharomyces pombe (strain 972 / ATCC 24843) (Fission yeast).